A 205-amino-acid chain; its full sequence is Recombination protein RecR (205 aa).

Residues 59-74 (CARCNTFCEGGLCDIC) form a C4-type zinc finger. One can recognise a Toprim domain in the interval 82–177 (RRLMVVHMPA…KVSRLSQGIP (96 aa)).

The protein belongs to the RecR family.

Functionally, may play a role in DNA repair. It seems to be involved in an RecBC-independent recombinational process of DNA repair. It may act with RecF and RecO. The protein is Recombination protein RecR of Neisseria meningitidis serogroup A / serotype 4A (strain DSM 15465 / Z2491).